The following is a 351-amino-acid chain: Protein TBATA (351 aa).

Disordered stretches follow at residues Lys16 to Glu40, Lys167 to Ala186, Ser195 to His216, and Glu292 to Ser351. Residues Lys167–Gly181 show a composition bias toward basic and acidic residues. 2 stretches are compositionally biased toward basic and acidic residues: residues Glu292–Glu302 and Thr340–Ser351.

It belongs to the TBATA family.

It localises to the cytoplasm. It is found in the cytosol. Its function is as follows. May play a role in spermatid differentiation. Modulates thymic stromal cell proliferation and thymus function. This is Protein TBATA (TBATA) from Homo sapiens (Human).